Reading from the N-terminus, the 898-residue chain is Transportin-1 (898 aa).

HEAT repeat units follow at residues 19-46, 51-89, 98-131, 137-174, 181-211, 224-251, 263-290, 306-397, 405-433, 445-472, 486-519, 527-560, 568-606, 614-665, 676-707, 715-748, 756-791, 799-832, 841-872, and 875-895; these read GLQQ…QKLE, YPDF…AHFQ, FIKS…KGEL, LLPK…LDSD, NIMI…QFII, FIEN…VMLL, HNIV…FWLT, PKLI…LANV, HILP…GAIA, PELI…TLSR, LKPL…EEEA, LAYI…ADSV, EYIQ…TALQ, EPVY…GLGG, ILTL…KACF, ADFM…IQMG, PMVL…YVCP, QQFI…ISVN, IFFC…KNQV, and ENWR…LAAF. Residues 41 to 109 form the Importin N-terminal domain; that stretch reads VQQKLEQLNQ…KSECLNNIGD (69 aa). The interval 347 to 374 is disordered; the sequence is FHRSRTVAQQHEEDGIEEEDDDDDEIDD. The segment covering 360–374 has biased composition (acidic residues); the sequence is DGIEEEDDDDDEIDD.

This sequence belongs to the importin beta family. Importin beta-2 subfamily. Identified in a complex that contains TNPO1, RAN and RANBP1. Binds HNRPA1, HNRPA2, HNRNPDL, RPS7, RPL5 and RAN. Interacts with H2A, H2B, H3 and H4 histones. Interacts with isoform 1 and isoform 5 of ADAR/ADAR1 (via DRBM 3 domain). Interacts with SNAI1 (via zinc fingers); the interaction mediates SNAI1 nuclear import. Interacts with SNAI2 (via zinc fingers). Interacts with RPL23A (via BIB domain) and SRP19; this interaction is involved in RPL23A and SRP19 import into the nucleus. Interacts (via HEAT repeats 8-12) with BAP1 (via non-classical PY-NLS); this interaction is direct, is involved in BAP1 nuclear import and disrupts BAP1 homodimerization.

It is found in the cytoplasm. The protein localises to the nucleus. In terms of biological role, functions in nuclear protein import as nuclear transport receptor. Serves as receptor for nuclear localization signals (NLS) in cargo substrates. May mediate docking of the importin/substrate complex to the nuclear pore complex (NPC) through binding to nucleoporin and the complex is subsequently translocated through the pore by an energy requiring, Ran-dependent mechanism. At the nucleoplasmic side of the NPC, Ran binds to the importin, the importin/substrate complex dissociates and importin is re-exported from the nucleus to the cytoplasm where GTP hydrolysis releases Ran. The directionality of nuclear import is thought to be conferred by an asymmetric distribution of the GTP- and GDP-bound forms of Ran between the cytoplasm and nucleus. Involved in nuclear import of M9-containing proteins. In vitro, binds directly to the M9 region of the heterogeneous nuclear ribonucleoproteins (hnRNP), A1 and A2 and mediates their nuclear import. Involved in hnRNP A1/A2 nuclear export. Mediates the nuclear import of ribosomal proteins RPL23A, RPS7 and RPL5. In vitro, mediates nuclear import of SRP19. Mediates the import of histones H2A, H2B, H3 and H4. Mediates nuclear import of ADAR/ADAR1 in a RanGTP-dependent manner. Main mediator of PR-DUB complex component BAP1 nuclear import; acts redundantly with the karyopherins KPNA1 and KPNA2. The sequence is that of Transportin-1 (Tnpo1) from Mus musculus (Mouse).